We begin with the raw amino-acid sequence, 505 residues long: Annexin A11 (505 aa).

Pro residues-rich tracts occupy residues methionine 1 to alanine 17 and proline 99 to leucine 160. 2 disordered regions span residues methionine 1–glycine 38 and proline 84–glycine 199. Positions proline 161–glycine 177 are enriched in low complexity. Annexin repeat units lie at residues phenylalanine 200 to lysine 271, threonine 272 to glutamine 343, serine 355 to lysine 427, and asparagine 431 to glycine 502. Lysine 248 and lysine 255 each carry N6-acetyllysine. At lysine 479 the chain carries N6-acetyllysine.

The protein belongs to the annexin family. As to quaternary structure, interacts with S100A6. Interacts with PDCD6 in a calcium-dependent manner. Interacts with KIF23 during cytokinesis.

The protein resides in the cytoplasm. Its subcellular location is the melanosome. The protein localises to the nucleus envelope. It localises to the nucleus. It is found in the nucleoplasm. The protein resides in the cytoskeleton. Its subcellular location is the spindle. Binds specifically to calcyclin in a calcium-dependent manner. Required for midbody formation and completion of the terminal phase of cytokinesis. In Homo sapiens (Human), this protein is Annexin A11 (ANXA11).